The primary structure comprises 119 residues: Large ribosomal subunit protein bL20 (119 aa).

It belongs to the bacterial ribosomal protein bL20 family.

Functionally, binds directly to 23S ribosomal RNA and is necessary for the in vitro assembly process of the 50S ribosomal subunit. It is not involved in the protein synthesizing functions of that subunit. This Streptococcus gordonii (strain Challis / ATCC 35105 / BCRC 15272 / CH1 / DL1 / V288) protein is Large ribosomal subunit protein bL20.